The sequence spans 64 residues: Lantipeptide Flvbeta.d (64 aa).

Positions Met1–Ala31 are cleaved as a propeptide — cleaved by FlvT. Positions Ser33 to Cys37 form a cross-link, lanthionine (Ser-Cys); by FlvM2. Residues Thr34 and Thr41 each carry the 2,3-didehydrobutyrine; by FlvM2 modification. Cross-links (beta-methyllanthionine (Thr-Cys); by FlvM2) lie at residues Thr44 to Cys52, Thr55 to Cys58, and Thr59 to Cys62. The segment at residues Ser47–Cys53 is a cross-link (lanthionine (Ser-Cys); by FlvM2).

Contains LL-lanthionine, DL-lanthionine, and DL-beta-methyllanthionine, when coepressed in E.coli with the flavecin synthetase FlvM2.

The protein localises to the secreted. Lanthionine-containing peptide that does probably not show antibacterial activity, since its analog [+2]Flvbeta.d does not show antibacterial activity against M.luteus. Also does not show antibiotic activity when tested with [Del2]Flvalpha.a, an analog of Flvalpha.a, which is encoded by the same operon than Flvbeta.d. The bactericidal activity of lantibiotics is based on depolarization of energized bacterial cytoplasmic membranes, initiated by the formation of aqueous transmembrane pores. The sequence is that of Lantipeptide Flvbeta.d from Ruminococcus flavefaciens.